Reading from the N-terminus, the 98-residue chain is MFEQRVNSDVLTVATVNSQDQVTQKPLRDSVKQALKNYFAQLNGQDVSDLYELVLAEVEQPLLDMVMQYTRGNQTRAALMMGINRGTLRKKLKKYGMN.

A DNA-binding region (H-T-H motif) is located at residues 74–93; it reads QTRAALMMGINRGTLRKKLK.

It belongs to the transcriptional regulatory Fis family. As to quaternary structure, homodimer.

Activates ribosomal RNA transcription. Plays a direct role in upstream activation of rRNA promoters. The protein is DNA-binding protein Fis of Yersinia enterocolitica serotype O:8 / biotype 1B (strain NCTC 13174 / 8081).